The sequence spans 246 residues: 2-C-methyl-D-erythritol 4-phosphate cytidylyltransferase (246 aa).

The protein belongs to the IspD/TarI cytidylyltransferase family. IspD subfamily.

The enzyme catalyses 2-C-methyl-D-erythritol 4-phosphate + CTP + H(+) = 4-CDP-2-C-methyl-D-erythritol + diphosphate. Its pathway is isoprenoid biosynthesis; isopentenyl diphosphate biosynthesis via DXP pathway; isopentenyl diphosphate from 1-deoxy-D-xylulose 5-phosphate: step 2/6. Its function is as follows. Catalyzes the formation of 4-diphosphocytidyl-2-C-methyl-D-erythritol from CTP and 2-C-methyl-D-erythritol 4-phosphate (MEP). The sequence is that of 2-C-methyl-D-erythritol 4-phosphate cytidylyltransferase from Chlorobaculum parvum (strain DSM 263 / NCIMB 8327) (Chlorobium vibrioforme subsp. thiosulfatophilum).